The chain runs to 414 residues: 2,3-diketo-5-methylthiopentyl-1-phosphate enolase (414 aa).

Residue Lys-99 is the Proton acceptor of the active site. Substrate is bound by residues Lys-148, 174–177 (KDDE), His-265, Gly-338, and 360–361 (GG). Positions 174, 176, and 177 each coordinate Mg(2+). N6-carboxylysine is present on Lys-174.

Belongs to the RuBisCO large chain family. Type IV subfamily. As to quaternary structure, homodimer. It depends on Mg(2+) as a cofactor.

The enzyme catalyses 5-methylsulfanyl-2,3-dioxopentyl phosphate = 2-hydroxy-5-methylsulfanyl-3-oxopent-1-enyl phosphate. It participates in amino-acid biosynthesis; L-methionine biosynthesis via salvage pathway; L-methionine from S-methyl-5-thio-alpha-D-ribose 1-phosphate: step 3/6. Functionally, catalyzes the enolization of 2,3-diketo-5-methylthiopentyl-1-phosphate (DK-MTP-1-P) into 2-hydroxy-3-keto-5-methylthiopentenyl-1-phosphate (HK-MTPenyl-1-P). This is 2,3-diketo-5-methylthiopentyl-1-phosphate enolase from Bacillus cereus (strain ATCC 10987 / NRS 248).